Consider the following 437-residue polypeptide: Phosphatidylserine decarboxylase proenzyme 1, mitochondrial (437 aa).

The N-terminal 18 residues, 1–18 (MLKFHRNVKPQFGAFARY), are a transit peptide targeting the mitochondrion. Topologically, residues 19–38 (SSLGKHNSRKRVGIIRLAYG) are mitochondrial matrix. Residues 39 to 57 (LTGIGLVGLAGFAWAQDRH) form a helical membrane-spanning segment. Topologically, residues 58–437 (EKTYQKKGVQ…PLGRVVPSSH (380 aa)) are mitochondrial intermembrane. Residues Asp-157, His-287, and Ser-401 each act as charge relay system; for autoendoproteolytic cleavage activity in the active site. Ser-401 (schiff-base intermediate with substrate; via pyruvic acid; for decarboxylase activity) is an active-site residue. At Ser-401 the chain carries Pyruvic acid (Ser); by autocatalysis.

The protein belongs to the phosphatidylserine decarboxylase family. PSD-B subfamily. Eukaryotic type I sub-subfamily. As to quaternary structure, heterodimer of a large membrane-associated beta subunit and a small pyruvoyl-containing alpha subunit. Pyruvate serves as cofactor. Post-translationally, is synthesized initially as an inactive proenzyme. Formation of the active enzyme involves a self-maturation process in which the active site pyruvoyl group is generated from an internal serine residue via an autocatalytic post-translational modification. Two non-identical subunits are generated from the proenzyme in this reaction, and the pyruvate is formed at the N-terminus of the alpha chain, which is derived from the carboxyl end of the proenzyme. The autoendoproteolytic cleavage occurs by a canonical serine protease mechanism, in which the side chain hydroxyl group of the serine supplies its oxygen atom to form the C-terminus of the beta chain, while the remainder of the serine residue undergoes an oxidative deamination to produce ammonia and the pyruvoyl prosthetic group on the alpha chain. During this reaction, the Ser that is part of the protease active site of the proenzyme becomes the pyruvoyl prosthetic group, which constitutes an essential element of the active site of the mature decarboxylase.

The protein localises to the mitochondrion. It localises to the mitochondrion inner membrane. It carries out the reaction a 1,2-diacyl-sn-glycero-3-phospho-L-serine + H(+) = a 1,2-diacyl-sn-glycero-3-phosphoethanolamine + CO2. Its pathway is phospholipid metabolism; phosphatidylethanolamine biosynthesis; phosphatidylethanolamine from CDP-diacylglycerol: step 2/2. In terms of biological role, catalyzes the formation of phosphatidylethanolamine (PtdEtn) from phosphatidylserine (PtdSer). Plays a central role in phospholipid metabolism and in the interorganelle trafficking of phosphatidylserine. Together with psd2 and psd3, responsible for the majority of phosphatidylethanolamine synthesis. In Schizosaccharomyces pombe (strain 972 / ATCC 24843) (Fission yeast), this protein is Phosphatidylserine decarboxylase proenzyme 1, mitochondrial.